We begin with the raw amino-acid sequence, 335 residues long: Biotin synthase (335 aa).

The region spanning 51-278 (NTVQLSSLLS…LAKVRLSAGR (228 aa)) is the Radical SAM core domain. Residues Cys66, Cys70, and Cys73 each coordinate [4Fe-4S] cluster. Cys110, Cys141, Cys201, and Arg273 together coordinate [2Fe-2S] cluster.

This sequence belongs to the radical SAM superfamily. Biotin synthase family. In terms of assembly, homodimer. [4Fe-4S] cluster serves as cofactor. [2Fe-2S] cluster is required as a cofactor.

It catalyses the reaction (4R,5S)-dethiobiotin + (sulfur carrier)-SH + 2 reduced [2Fe-2S]-[ferredoxin] + 2 S-adenosyl-L-methionine = (sulfur carrier)-H + biotin + 2 5'-deoxyadenosine + 2 L-methionine + 2 oxidized [2Fe-2S]-[ferredoxin]. It participates in cofactor biosynthesis; biotin biosynthesis; biotin from 7,8-diaminononanoate: step 2/2. Catalyzes the conversion of dethiobiotin (DTB) to biotin by the insertion of a sulfur atom into dethiobiotin via a radical-based mechanism. This Bordetella pertussis (strain Tohama I / ATCC BAA-589 / NCTC 13251) protein is Biotin synthase.